The following is a 317-amino-acid chain: Secreted frizzled-related protein 5 (317 aa).

Positions 1-29 are cleaved as a signal peptide; sequence MRAAAAGGGVRTAALALLLGALHWAPARC. The 118-residue stretch at 48 to 165 folds into the FZ domain; sequence SKPPQCLDIP…PLDNDLCIAV (118 aa). 8 disulfides stabilise this stretch: C53-C116, C63-C109, C100-C135, C124-C162, C128-C152, C181-C253, C184-C255, and C198-C303. Residues 181–303 form the NTR domain; the sequence is CAQCEMEHSA…AVKFMFSYPC (123 aa).

This sequence belongs to the secreted frizzled-related protein (sFRP) family. In terms of tissue distribution, highly expressed in the retinal pigment epithelium (RPE) and pancreas. Weak expression in heart, liver and muscle.

It localises to the secreted. Soluble frizzled-related proteins (sFRPS) function as modulators of Wnt signaling through direct interaction with Wnts. They have a role in regulating cell growth and differentiation in specific cell types. SFRP5 may be involved in determining the polarity of photoreceptor, and perhaps, other cells in the retina. The protein is Secreted frizzled-related protein 5 (SFRP5) of Homo sapiens (Human).